The primary structure comprises 239 residues: Lactate utilization protein A (239 aa).

It belongs to the LutA/YkgE family.

In terms of biological role, is involved in L-lactate degradation and allows cells to grow with lactate as the sole carbon source. The protein is Lactate utilization protein A of Bacillus cereus (strain B4264).